Here is a 121-residue protein sequence, read N- to C-terminus: UPF0102 protein BDI_2565 (121 aa).

Belongs to the UPF0102 family.

The protein is UPF0102 protein BDI_2565 of Parabacteroides distasonis (strain ATCC 8503 / DSM 20701 / CIP 104284 / JCM 5825 / NCTC 11152).